Consider the following 149-residue polypeptide: 3-dehydroquinate dehydratase (149 aa).

Y26 functions as the Proton acceptor in the catalytic mechanism. N77, H83, and D90 together coordinate substrate. H103 (proton donor) is an active-site residue. Residues L104 to S105 and R114 each bind substrate.

It belongs to the type-II 3-dehydroquinase family. In terms of assembly, homododecamer.

It catalyses the reaction 3-dehydroquinate = 3-dehydroshikimate + H2O. The protein operates within metabolic intermediate biosynthesis; chorismate biosynthesis; chorismate from D-erythrose 4-phosphate and phosphoenolpyruvate: step 3/7. In terms of biological role, catalyzes a trans-dehydration via an enolate intermediate. This chain is 3-dehydroquinate dehydratase, found in Edwardsiella ictaluri (strain 93-146).